Here is a 281-residue protein sequence, read N- to C-terminus: MSKYSDAKELAGLTLGKKTEYANQYDASLLQPVPRSLNRDDLELGDTLPFLGHDIWTLYELSWLNSKGLPQVAVGEVYIPATSANLIESKSFKLYLNSYNQTRFASWEEVAERLTQDLSACAGEKVLVEVNPVGHYTNQPIVTMEGECIDDQDIEINSYDFDADLLAGAAGEDQVEEVLHSHLLKSNCLITNQPDWGSVEIRYQGAKIDREKLLRYLVSFREHNEFHEQCVERIFTDLMKYCQPNKLTVFARYTRRGGLDINPYRSTEQDKPAHNHRMARQ.

87–89 (IES) is a substrate binding site. Residue 89–90 (SK) coordinates NADPH. Cys-188 (thioimide intermediate) is an active-site residue. The active-site Proton donor is the Asp-195. 227–228 (HE) contributes to the substrate binding site. 256–257 (RG) contacts NADPH. Positions 261 to 281 (INPYRSTEQDKPAHNHRMARQ) are disordered.

It belongs to the GTP cyclohydrolase I family. QueF type 2 subfamily. As to quaternary structure, homodimer.

The protein localises to the cytoplasm. It carries out the reaction 7-aminomethyl-7-carbaguanine + 2 NADP(+) = 7-cyano-7-deazaguanine + 2 NADPH + 3 H(+). It participates in tRNA modification; tRNA-queuosine biosynthesis. Functionally, catalyzes the NADPH-dependent reduction of 7-cyano-7-deazaguanine (preQ0) to 7-aminomethyl-7-deazaguanine (preQ1). This chain is NADPH-dependent 7-cyano-7-deazaguanine reductase, found in Vibrio parahaemolyticus serotype O3:K6 (strain RIMD 2210633).